Here is a 96-residue protein sequence, read N- to C-terminus: UPF0235 protein YggU (96 aa).

This sequence belongs to the UPF0235 family.

The polypeptide is UPF0235 protein YggU (Escherichia coli (strain K12 / MC4100 / BW2952)).